Here is a 453-residue protein sequence, read N- to C-terminus: Ribosomal protein uS12 methylthiotransferase RimO (453 aa).

One can recognise an MTTase N-terminal domain in the interval 4–120 (TSVHIVSLGC…IADHLRVLME (117 aa)). Residues cysteine 13, cysteine 49, cysteine 83, cysteine 161, cysteine 165, and cysteine 168 each contribute to the [4Fe-4S] cluster site. One can recognise a Radical SAM core domain in the interval 147-377 (STPPYSAYLK…MEEQAVISHE (231 aa)). The TRAM domain occupies 380–450 (QTLVGSLQEV…DYDLFAEVIS (71 aa)).

It belongs to the methylthiotransferase family. RimO subfamily. Requires [4Fe-4S] cluster as cofactor.

It localises to the cytoplasm. The catalysed reaction is L-aspartate(89)-[ribosomal protein uS12]-hydrogen + (sulfur carrier)-SH + AH2 + 2 S-adenosyl-L-methionine = 3-methylsulfanyl-L-aspartate(89)-[ribosomal protein uS12]-hydrogen + (sulfur carrier)-H + 5'-deoxyadenosine + L-methionine + A + S-adenosyl-L-homocysteine + 2 H(+). In terms of biological role, catalyzes the methylthiolation of an aspartic acid residue of ribosomal protein uS12. The protein is Ribosomal protein uS12 methylthiotransferase RimO of Syntrophus aciditrophicus (strain SB).